Reading from the N-terminus, the 641-residue chain is Forkhead box protein P4 (641 aa).

2 disordered regions span residues 1-43 (MMVE…NGEL) and 239-264 (SFPT…RRES). Composition is skewed to polar residues over residues 8 to 27 (IRST…QSDS) and 239 to 259 (SFPT…NGQN). The C2H2-type zinc finger occupies 278 to 303 (GECRWPGCEALCEDMGQFIKHLNTEH). The interval 320 to 341 (VQQLEIQLAKESERLQAMMTHL) is leucine-zipper. Residues 354-358 (PLNLV) form a ctbp1-binding region. The fork-head DNA-binding region spans 436 to 526 (RPPFTYASLI…PPKMTGSPTL (91 aa)). The segment at 563–641 (SSGSVLHGGH…ESESPMEDLP (79 aa)) is disordered. Over residues 576–599 (TSTGEPGNSNGSSPRLSPQYSQSI) the composition is skewed to polar residues. The span at 600–611 (HVKEEPAEDDVR) shows a compositional bias: basic and acidic residues. Residues 629 to 641 (RDLESESPMEDLP) show a composition bias toward acidic residues.

In terms of assembly, dimerization is required for DNA-binding. As to expression, first expressed in the anterior neural field of stage 15 embryos. At stage 18, localized in three domains of the brain (rostral forebrain, midbrain and hindbrain) and in the eye anlage. Cerebral and retinal expression persists at later stages with additional expression in the branchial arches, at the base of the hatching gland, and in the pancreas.

The protein localises to the nucleus. Its function is as follows. Transcriptional repressor. The sequence is that of Forkhead box protein P4 from Xenopus laevis (African clawed frog).